The primary structure comprises 341 residues: HTH-type transcriptional repressor PurR (341 aa).

The 55-residue stretch at 2-56 (ATIKDVAKRANVSTTTVSHVINKTRFVAEETRNAVWAAIKELHYSPSAVARSLKV) folds into the HTH lacI-type domain. The H-T-H motif DNA-binding region spans 4–23 (IKDVAKRANVSTTTVSHVIN). A DNA-binding region spans residues 48 to 56 (SAVARSLKV). Positions 73, 190, 192, 221, and 275 each coordinate hypoxanthine.

As to quaternary structure, homodimer.

The protein operates within purine metabolism; purine nucleotide biosynthesis [regulation]. Its function is as follows. Is the main repressor of the genes involved in the de novo synthesis of purine nucleotides, regulating purB, purC, purEK, purF, purHD, purL, purMN and guaBA expression. PurR is allosterically activated to bind its cognate DNA by binding the purine corepressors, hypoxanthine or guanine, thereby effecting transcription repression. This Escherichia fergusonii (strain ATCC 35469 / DSM 13698 / CCUG 18766 / IAM 14443 / JCM 21226 / LMG 7866 / NBRC 102419 / NCTC 12128 / CDC 0568-73) protein is HTH-type transcriptional repressor PurR.